The sequence spans 634 residues: Dachshund homolog 2 (634 aa).

Positions 76-162 are DACHbox-N; it reads RMVDMHGVKV…LITRKDFETL (87 aa). 3 disordered regions span residues 171–194, 244–286, and 378–416; these read RKRQ…KRSL, LQGN…SGPQ, and IPES…MDHH. Polar residues predominate over residues 244–269; that stretch reads LQGNGSQNGTESEPDDLNSTTGGSES. A compositionally biased stretch (low complexity) spans 396 to 412; the sequence is SQTSSHPSSSVSSSPSQ. The DACHbox-C stretch occupies residues 488–568; sequence SSVETLLTNI…KAKRKLQEAL (81 aa). The stretch at 494-588 forms a coiled coil; sequence LTNIQGLLKV…EQALKQATSG (95 aa).

This sequence belongs to the DACH/dachshund family. In terms of assembly, interacts with SIX6. Interacts with EYA2. Expressed in embryo, and at lower levels in the newborn.

The protein localises to the nucleus. Its function is as follows. Transcription factor that is involved in regulation of organogenesis. Seems to be a regulator for SIX1 and SIX6. Seems to act as a corepressor of SIX6 in regulating proliferation by directly repressing cyclin-dependent kinase inhibitors, including the p27Kip1 promoter. Is recruited with SIX6 to the p27Kip1 promoter in embryonal retina. SIX6 corepression also seems to involve NCOR1, TBL1, HDAC1 and HDAC3. May be involved together with PAX3, SIX1, and EYA2 in regulation of myogenesis. In the developing somite, expression of DACH2 and PAX3 is regulated by the overlying ectoderm, and DACH2 and PAX3 positively regulate each other's expression. Probably binds to DNA via its DACHbox-N domain. This is Dachshund homolog 2 (Dach2) from Mus musculus (Mouse).